Reading from the N-terminus, the 120-residue chain is Small ribosomal subunit protein uS13 (120 aa).

The interval 93–120 (RKGLPVRGQTTKNNARTRKGKKKTVGSK) is disordered. The segment covering 107–120 (ARTRKGKKKTVGSK) has biased composition (basic residues).

Belongs to the universal ribosomal protein uS13 family. In terms of assembly, part of the 30S ribosomal subunit. Forms a loose heterodimer with protein S19. Forms two bridges to the 50S subunit in the 70S ribosome.

Functionally, located at the top of the head of the 30S subunit, it contacts several helices of the 16S rRNA. In the 70S ribosome it contacts the 23S rRNA (bridge B1a) and protein L5 of the 50S subunit (bridge B1b), connecting the 2 subunits; these bridges are implicated in subunit movement. Contacts the tRNAs in the A and P-sites. This is Small ribosomal subunit protein uS13 from Helicobacter acinonychis (strain Sheeba).